The primary structure comprises 409 residues: Elongation factor Tu (409 aa).

The tr-type G domain maps to 10–214 (KPHVNIGTIG…AVDSYIPDPE (205 aa)). Residues 19–26 (GHVDHGKT) form a G1 region. Residue 19–26 (GHVDHGKT) coordinates GTP. Position 26 (threonine 26) interacts with Mg(2+). The interval 60–64 (GITIN) is G2. The segment at 81–84 (DCPG) is G3. Residues 81 to 85 (DCPGH) and 136 to 139 (NKED) each bind GTP. A G4 region spans residues 136-139 (NKED). Residues 174–176 (SGL) are G5.

As to quaternary structure, monomer.

It localises to the cytoplasm. The enzyme catalyses GTP + H2O = GDP + phosphate + H(+). GTP hydrolase that promotes the GTP-dependent binding of aminoacyl-tRNA to the A-site of ribosomes during protein biosynthesis. This Nostoc sp. (strain PCC 7120 / SAG 25.82 / UTEX 2576) protein is Elongation factor Tu.